A 211-amino-acid polypeptide reads, in one-letter code: FMN-dependent NADH:quinone oxidoreductase 3 (211 aa).

Position 102-105 (102-105 (MWNF)) interacts with FMN.

This sequence belongs to the azoreductase type 1 family. In terms of assembly, homodimer. FMN serves as cofactor.

It carries out the reaction 2 a quinone + NADH + H(+) = 2 a 1,4-benzosemiquinone + NAD(+). It catalyses the reaction N,N-dimethyl-1,4-phenylenediamine + anthranilate + 2 NAD(+) = 2-(4-dimethylaminophenyl)diazenylbenzoate + 2 NADH + 2 H(+). In terms of biological role, quinone reductase that provides resistance to thiol-specific stress caused by electrophilic quinones. Its function is as follows. Also exhibits azoreductase activity. Catalyzes the reductive cleavage of the azo bond in aromatic azo compounds to the corresponding amines. The sequence is that of FMN-dependent NADH:quinone oxidoreductase 3 from Bacillus cereus (strain ATCC 10987 / NRS 248).